The following is a 75-amino-acid chain: Alpha-elapitoxin-Bc2a (75 aa).

A signal peptide spans 1–2 (YT). 5 cysteine pairs are disulfide-bonded: cysteine 5–cysteine 24, cysteine 17–cysteine 45, cysteine 30–cysteine 34, cysteine 49–cysteine 60, and cysteine 61–cysteine 66.

The protein belongs to the three-finger toxin family. Long-chain subfamily. Type II alpha-neurotoxin sub-subfamily. In terms of assembly, monomer in solution, homodimer in crystal state. In terms of tissue distribution, expressed by the venom gland.

It is found in the secreted. Functionally, binds to muscular and neuronal nicotinic acetylcholine receptor (nAChR) and inhibits acetylcholine from binding to the receptor, thereby impairing neuromuscular and neuronal transmission. Reversibly blocks chick and mouse muscle nicotinic acetylcholine receptors. Blocks muscle type nAChR with an IC(50)=30 nM, when heterologously expressed in oocytes. Also binds with high affinity to alpha-7/CHRNA7 nAChRs. In addition, shows a weak inhibition of neuronal alpha-3-beta-2/CHRNA3-CHRNB2 nAChR (IC(50)=2.9 uM). Selectively binds to alpha-1-delta subunit interface of the mouse muscle nicotinic acetylcholine receptor, with a 10-fold higher affinity for the adult than for the fetal receptors. In vivo, when intraperitoneally injected into mice, causes flaccid paralysis and respiratory distress, followed by death within 2-4 hours. The polypeptide is Alpha-elapitoxin-Bc2a (Bungarus candidus (Malayan krait)).